We begin with the raw amino-acid sequence, 257 residues long: Uroplakin-1a (257 aa).

The Cytoplasmic portion of the chain corresponds to M1–P13. The chain crosses the membrane as a helical span at residues V14–F34. Over A35 to D58 the chain is Extracellular. Residues V59–L85 form a helical membrane-spanning segment. The Cytoplasmic portion of the chain corresponds to C86–Y90. Residues M91–I111 traverse the membrane as a helical segment. Residues T112–T229 lie on the Extracellular side of the membrane. N169 carries N-linked (GlcNAc...) asparagine glycosylation. Residues W230–M251 form a helical membrane-spanning segment. Residues Y252–L257 lie on the Cytoplasmic side of the membrane.

This sequence belongs to the tetraspanin (TM4SF) family. In terms of assembly, homodimer; disulfide-linked. Interacts with uroplakin-2 (UPK2). Binds to uropathogenic E.coli fimH.

Its subcellular location is the membrane. Component of the asymmetric unit membrane (AUM); a highly specialized biomembrane elaborated by terminally differentiated urothelial cells. May play an important role in normal bladder epithelial physiology, possibly in regulating membrane permeability of superficial umbrella cells or in stabilizing the apical membrane through AUM/cytoskeletal interactions. The polypeptide is Uroplakin-1a (Upk1a) (Mus musculus (Mouse)).